A 392-amino-acid polypeptide reads, in one-letter code: BURP domain protein RD22 (392 aa).

Positions methionine 1–aspartate 22 are cleaved as a signal peptide. TXV repeat units lie at residues threonine 56–valine 58, threonine 78–valine 80, threonine 100–valine 102, and threonine 125–valine 127. The segment at asparagine 57–glutamate 164 is 5 X approximate repeats. Positions glycine 61–valine 136 are disordered. A compositionally biased stretch (gly residues) spans glycine 94–valine 114. In terms of domain architecture, BURP spans phenylalanine 176–tyrosine 392.

Expressed in seed. Highest expression in leaves and guard cells.

Acts to suppress chlorophyll degradation under moisture stress. The sequence is that of BURP domain protein RD22 from Arabidopsis thaliana (Mouse-ear cress).